The following is a 398-amino-acid chain: Putative tyrosine-protein phosphatase C15H7.3 (398 aa).

Residues 1–15 (MERSQKSARKKKKTS) show a composition bias toward basic residues. A disordered region spans residues 1–114 (MERSQKSARK…EPWSEEEPAK (114 aa)). A compositionally biased stretch (basic and acidic residues) spans 18–40 (GNDRSIRSERKSKQKKPAGEKSQ). The segment covering 41–50 (KSRRTRKSRG) has biased composition (basic residues). A compositionally biased stretch (polar residues) spans 55-73 (GFTSRETIQPSSSGQSEGT). The span at 74–114 (TRMDDQKDEKKDDKKEEKKEERKEEKKEEVKEPWSEEEPAK) shows a compositional bias: basic and acidic residues. One can recognise a Tyrosine-protein phosphatase domain in the interval 125 to 376 (TNVGGTFKQT…GTVHRSMACW (252 aa)).

The protein belongs to the protein-tyrosine phosphatase family. Non-receptor class subfamily.

The enzyme catalyses O-phospho-L-tyrosyl-[protein] + H2O = L-tyrosyl-[protein] + phosphate. The protein is Putative tyrosine-protein phosphatase C15H7.3 of Caenorhabditis elegans.